Reading from the N-terminus, the 441-residue chain is Apolipoprotein N-acyltransferase (441 aa).

7 helical membrane passes run 23–43, 45–65, 75–95, 97–117, 133–153, 156–176, and 178–198; these read IIFK…SIYL, FFEN…GLVL, YFWI…LSSI, FNLN…YGLL, GIFC…WGIF, YGFF…AYFI, and EGYI…FSGF. Residues 215-441 enclose the CN hydrolase domain; that stretch reads INTNISQDQK…LSKEIFNDKK (227 aa). Residue Glu-256 is the Proton acceptor of the active site. The active site involves Lys-310. Cys-359 functions as the Nucleophile in the catalytic mechanism.

It belongs to the CN hydrolase family. Apolipoprotein N-acyltransferase subfamily.

The protein resides in the cell inner membrane. The catalysed reaction is N-terminal S-1,2-diacyl-sn-glyceryl-L-cysteinyl-[lipoprotein] + a glycerophospholipid = N-acyl-S-1,2-diacyl-sn-glyceryl-L-cysteinyl-[lipoprotein] + a 2-acyl-sn-glycero-3-phospholipid + H(+). It functions in the pathway protein modification; lipoprotein biosynthesis (N-acyl transfer). In terms of biological role, catalyzes the phospholipid dependent N-acylation of the N-terminal cysteine of apolipoprotein, the last step in lipoprotein maturation. The protein is Apolipoprotein N-acyltransferase of Campylobacter jejuni subsp. jejuni serotype O:2 (strain ATCC 700819 / NCTC 11168).